The sequence spans 643 residues: Type VI secretion system spike protein VgrG1a (643 aa).

Belongs to the VgrG protein family. In terms of assembly, forms homotrimers. Part of the type VI secretion system (T6SS). Interacts with EagT6 and Tse6; these interactions are required for Tse6 loading onto VgrG1. Interacts with Hcp1.

The protein resides in the secreted. Part of the H1 type VI secretion system (H1-T6SS) specialized secretion system, which delivers several virulence factors in both prokaryotic and eukaryotic cells during infection. Forms the spike at the tip of the elongating tube formed by haemolysin co-regulated protein 1/Hcp1. Allows the delivery of the Tse6 toxin to target cells where it exerts its toxicity. The sequence is that of Type VI secretion system spike protein VgrG1a from Pseudomonas aeruginosa (strain ATCC 15692 / DSM 22644 / CIP 104116 / JCM 14847 / LMG 12228 / 1C / PRS 101 / PAO1).